Consider the following 206-residue polypeptide: Small ribosomal subunit protein uS4 (206 aa).

The 62-residue stretch at 96–157 (QRLDNVVYRM…KAKKQARIGA (62 aa)) folds into the S4 RNA-binding domain.

It belongs to the universal ribosomal protein uS4 family. Part of the 30S ribosomal subunit. Contacts protein S5. The interaction surface between S4 and S5 is involved in control of translational fidelity.

One of the primary rRNA binding proteins, it binds directly to 16S rRNA where it nucleates assembly of the body of the 30S subunit. Functionally, with S5 and S12 plays an important role in translational accuracy. The chain is Small ribosomal subunit protein uS4 from Idiomarina loihiensis (strain ATCC BAA-735 / DSM 15497 / L2-TR).